Consider the following 169-residue polypeptide: uncharacterized protein (169 aa).

Disordered regions lie at residues Val-32–Pro-53 and Val-148–Ala-169.

This is an uncharacterized protein from Homo sapiens (Human).